Here is a 192-residue protein sequence, read N- to C-terminus: Threonylcarbamoyl-AMP synthase (192 aa).

A YrdC-like domain is found at 5–192 (TTSVAEAAHC…DATTGRVIRD (188 aa)).

This sequence belongs to the SUA5 family. TsaC subfamily.

The protein localises to the cytoplasm. It catalyses the reaction L-threonine + hydrogencarbonate + ATP = L-threonylcarbamoyladenylate + diphosphate + H2O. In terms of biological role, required for the formation of a threonylcarbamoyl group on adenosine at position 37 (t(6)A37) in tRNAs that read codons beginning with adenine. Catalyzes the conversion of L-threonine, HCO(3)(-)/CO(2) and ATP to give threonylcarbamoyl-AMP (TC-AMP) as the acyladenylate intermediate, with the release of diphosphate. This Acinetobacter baylyi (strain ATCC 33305 / BD413 / ADP1) protein is Threonylcarbamoyl-AMP synthase.